A 128-amino-acid polypeptide reads, in one-letter code: Keratin-associated protein 2-1 (128 aa).

The 10 X 5 AA repeats of C-C-[CDPQRWG]-[APRS]-[CIPSTVD] stretch occupies residues 5–112; that stretch reads CCGSTFSSLS…SVQSPCCRPP (108 aa).

Belongs to the KRTAP type 2 family. Interacts with hair keratins.

In terms of biological role, in the hair cortex, hair keratin intermediate filaments are embedded in an interfilamentous matrix, consisting of hair keratin-associated proteins (KRTAP), which are essential for the formation of a rigid and resistant hair shaft through their extensive disulfide bond cross-linking with abundant cysteine residues of hair keratins. The matrix proteins include the high-sulfur and high-glycine-tyrosine keratins. This chain is Keratin-associated protein 2-1 (KRTAP2-1), found in Homo sapiens (Human).